The chain runs to 260 residues: Indole-3-glycerol phosphate synthase (260 aa).

The protein belongs to the TrpC family.

The catalysed reaction is 1-(2-carboxyphenylamino)-1-deoxy-D-ribulose 5-phosphate + H(+) = (1S,2R)-1-C-(indol-3-yl)glycerol 3-phosphate + CO2 + H2O. Its pathway is amino-acid biosynthesis; L-tryptophan biosynthesis; L-tryptophan from chorismate: step 4/5. The sequence is that of Indole-3-glycerol phosphate synthase from Staphylococcus aureus (strain Mu3 / ATCC 700698).